The following is a 505-amino-acid chain: Lysine--tRNA ligase (505 aa).

A compositionally biased stretch (polar residues) spans 1 to 11; sequence MSDQQLDQPSL. A disordered region spans residues 1–23; the sequence is MSDQQLDQPSLSHEERQHEENKL. Residues 12 to 23 show a composition bias toward basic and acidic residues; sequence SHEERQHEENKL. Residues E415 and E422 each coordinate Mg(2+).

This sequence belongs to the class-II aminoacyl-tRNA synthetase family. Homodimer. It depends on Mg(2+) as a cofactor.

The protein localises to the cytoplasm. The catalysed reaction is tRNA(Lys) + L-lysine + ATP = L-lysyl-tRNA(Lys) + AMP + diphosphate. This Ectopseudomonas mendocina (strain ymp) (Pseudomonas mendocina) protein is Lysine--tRNA ligase.